A 380-amino-acid polypeptide reads, in one-letter code: MTPTRKINPLMKLINHSFIDLPTPSNISTWWNFGSLLGACLILQITTGLFLAMHYSPDASTAFSSIAHITRDVNYGWIIRYLHANGASMLFICLFLHVGRGLYYGSFLYLETWNIGIILLLTTMATAFMGYVLPWGQMSFWGATVITNLLSAIPYIGTDLVQWVWGGYSVDSPTLTRFFTLHFILPFIITALTTLHLLFLHETGSNNPLGITSHSDKITFHPYYTTKDILGLFLFLLALMVLTLFSPDLLGDPDNYTLANPLITPPHIKPEWYFLFAYTILRSVPNKLGGVLALLLSILILAVIPILHTSKQQSMMFRPLSQLLYWLLATDLLILTWIGGQPVSYPFITIGQVASVLYFTTILILMPIISLIENKMLEWA.

The next 4 membrane-spanning stretches (helical) occupy residues 33–53 (FGSLLGACLILQITTGLFLAM), 77–98 (WIIRYLHANGASMLFICLFLHV), 113–133 (WNIGIILLLTTMATAFMGYVL), and 178–198 (FFTLHFILPFIITALTTLHLL). Heme b contacts are provided by H83 and H97. Heme b contacts are provided by H182 and H196. H201 is an a ubiquinone binding site. Helical transmembrane passes span 226-246 (TKDILGLFLFLLALMVLTLFS), 288-308 (LGGVLALLLSILILAVIPILH), 320-340 (LSQLLYWLLATDLLILTWIGG), and 347-367 (FITIGQVASVLYFTTILILMP).

The protein belongs to the cytochrome b family. As to quaternary structure, the cytochrome bc1 complex contains 11 subunits: 3 respiratory subunits (MT-CYB, CYC1 and UQCRFS1), 2 core proteins (UQCRC1 and UQCRC2) and 6 low-molecular weight proteins (UQCRH/QCR6, UQCRB/QCR7, UQCRQ/QCR8, UQCR10/QCR9, UQCR11/QCR10 and a cleavage product of UQCRFS1). This cytochrome bc1 complex then forms a dimer. It depends on heme b as a cofactor.

The protein localises to the mitochondrion inner membrane. Functionally, component of the ubiquinol-cytochrome c reductase complex (complex III or cytochrome b-c1 complex) that is part of the mitochondrial respiratory chain. The b-c1 complex mediates electron transfer from ubiquinol to cytochrome c. Contributes to the generation of a proton gradient across the mitochondrial membrane that is then used for ATP synthesis. The polypeptide is Cytochrome b (MT-CYB) (Pan paniscus (Pygmy chimpanzee)).